The following is a 130-amino-acid chain: Small ribosomal subunit protein uS9 (130 aa).

The interval lysine 99 to arginine 130 is disordered. A compositionally biased stretch (basic residues) spans lysine 111–arginine 130.

Belongs to the universal ribosomal protein uS9 family.

The sequence is that of Small ribosomal subunit protein uS9 from Staphylococcus aureus (strain Mu3 / ATCC 700698).